Reading from the N-terminus, the 277-residue chain is MDNHTAKDIGMKRSASELALQEYLTTSPLDPCFDLMNRDYTCELRDSLLWSEGLFPAGPFRDAQSSICENLSADSPVSANKPEVRGGVRRTTSGSSHVNSDDEDAETEAGQSEMTNDPNDLKRIRRMNSNRESAKRSRRRKQEYLVDLETQVDSLKGDNSTLYKQLIDATQQFRSAGTNNRVLKSDVETLRVKVKLAEDLVARGSLTSSLNQLLQTHLSPPSHSISSLHYTGNTSPAITVHSDQSLFPGMTLSGQNSSPGLGNVSSEAVSCVSDIWP.

The segment at 73–141 (ADSPVSANKP…ESAKRSRRRK (69 aa)) is disordered. Phosphoserine is present on serine 100. The segment covering 109-118 (AGQSEMTNDP) has biased composition (polar residues). A bZIP domain is found at 120–183 (DLKRIRRMNS…RSAGTNNRVL (64 aa)). The tract at residues 122–141 (KRIRRMNSNRESAKRSRRRK) is basic motif. Positions 124-131 (IRRMNSNR) match the Nuclear localization signal motif. Residues 148 to 162 (LETQVDSLKGDNSTL) are leucine-zipper.

It belongs to the bZIP family. As to quaternary structure, homodimer. Interacts with BZIP1, BZIP2, BZIP10, BZIP11, BZIP25, BZIP44, BZIP53 and BZIP63. In terms of processing, phosphorylated. In terms of tissue distribution, expressed in roots, shoots, stems, young leaves, and flowers, mostly in vascular tissues (e.g. phloem).

The protein resides in the nucleus. Functionally, transcription factor. The sequence is that of Basic leucine zipper 9 (BZIP9) from Arabidopsis thaliana (Mouse-ear cress).